A 367-amino-acid polypeptide reads, in one-letter code: tRNA-specific 2-thiouridylase MnmA (367 aa).

Residues 13 to 20 (GLSGGVDS) and Met-39 contribute to the ATP site. The interaction with target base in tRNA stretch occupies residues 99–101 (NPD). The Nucleophile role is filled by Cys-104. A disulfide bridge connects residues Cys-104 and Cys-200. Gly-128 lines the ATP pocket. Residues 150–152 (KDQ) form an interaction with tRNA region. The active-site Cysteine persulfide intermediate is the Cys-200. The interval 307-308 (RY) is interaction with tRNA.

It belongs to the MnmA/TRMU family.

It localises to the cytoplasm. The enzyme catalyses S-sulfanyl-L-cysteinyl-[protein] + uridine(34) in tRNA + AH2 + ATP = 2-thiouridine(34) in tRNA + L-cysteinyl-[protein] + A + AMP + diphosphate + H(+). Catalyzes the 2-thiolation of uridine at the wobble position (U34) of tRNA, leading to the formation of s(2)U34. This chain is tRNA-specific 2-thiouridylase MnmA, found in Neisseria gonorrhoeae (strain ATCC 700825 / FA 1090).